Consider the following 540-residue polypeptide: Chaperonin GroEL (540 aa).

Residues 29 to 32 (TLGP), 86 to 90 (DGTTT), glycine 413, and aspartate 495 contribute to the ATP site.

Belongs to the chaperonin (HSP60) family. In terms of assembly, forms a cylinder of 14 subunits composed of two heptameric rings stacked back-to-back. Interacts with the co-chaperonin GroES.

Its subcellular location is the cytoplasm. The catalysed reaction is ATP + H2O + a folded polypeptide = ADP + phosphate + an unfolded polypeptide.. Functionally, together with its co-chaperonin GroES, plays an essential role in assisting protein folding. The GroEL-GroES system forms a nano-cage that allows encapsulation of the non-native substrate proteins and provides a physical environment optimized to promote and accelerate protein folding. In Caldanaerobacter subterraneus subsp. tengcongensis (strain DSM 15242 / JCM 11007 / NBRC 100824 / MB4) (Thermoanaerobacter tengcongensis), this protein is Chaperonin GroEL.